Consider the following 188-residue polypeptide: RxLR effector protein Avh241 (188 aa).

A signal peptide spans 1 to 16; sequence MRQYCLLLIVLALAAA. A RxLR-dEER motif is present at residues 43-58; the sequence is RLLRSEPQDEDTFEDR. Residues 73–78 carry the Host plasma membrane localization motif motif; that stretch reads GAAKAK.

This sequence belongs to the RxLR effector family.

It localises to the secreted. It is found in the host cell membrane. Effector that triggers cell death in a variety of plant species (including tobacco, tomato and soybean), regardless of the Rps genes present. Avh241 interacts with the plant immune system via at least two different mechanisms, one recognized by plants dependent on subcellular localization and one promoting infection independent on membrane localization. The cell death triggered by Avh241 in N.benthamiana requires the two host mitogen-activated protein kinases, MEK2 and WIPK. This Phytophthora sojae (strain P6497) (Soybean stem and root rot agent) protein is RxLR effector protein Avh241.